Reading from the N-terminus, the 76-residue chain is Exodeoxyribonuclease 7 small subunit (76 aa).

Belongs to the XseB family. In terms of assembly, heterooligomer composed of large and small subunits.

It localises to the cytoplasm. It carries out the reaction Exonucleolytic cleavage in either 5'- to 3'- or 3'- to 5'-direction to yield nucleoside 5'-phosphates.. Functionally, bidirectionally degrades single-stranded DNA into large acid-insoluble oligonucleotides, which are then degraded further into small acid-soluble oligonucleotides. The chain is Exodeoxyribonuclease 7 small subunit from Methylococcus capsulatus (strain ATCC 33009 / NCIMB 11132 / Bath).